The sequence spans 697 residues: Transmembrane protein 168 (697 aa).

3 helical membrane-spanning segments follow: residues 36–56 (LGYL…YVRW), 63–83 (LILV…ILYY), and 89–109 (AASL…LCFL). Asn111 carries N-linked (GlcNAc...) asparagine glycosylation. The next 7 membrane-spanning stretches (helical) occupy residues 172-192 (MLVE…MLII), 199-219 (FLAI…SLET), 223-243 (PIAF…DIYF), 265-285 (LSVV…AFKL), 293-313 (FVIP…IIFL), 352-372 (FCLI…ILGA), and 380-400 (GIFL…HGLF). Residues Asn533 and Asn598 are each glycosylated (N-linked (GlcNAc...) asparagine). Residues 646-666 (ITYPLVHLANWLCGLNLFWIC) traverse the membrane as a helical segment.

This sequence belongs to the TMEM168 family.

It localises to the nucleus membrane. Functionally, plays a key role in maintaining the cardiac electrical stability by modulating cell surface expression of SCN5A. May play a role in the modulation of anxiety behavior by regulating GABAergic neuronal system in the nucleus accumbens. The sequence is that of Transmembrane protein 168 from Homo sapiens (Human).